The chain runs to 233 residues: Probable 2-phosphosulfolactate phosphatase (233 aa).

Belongs to the ComB family. Mg(2+) serves as cofactor.

It catalyses the reaction (2R)-O-phospho-3-sulfolactate + H2O = (2R)-3-sulfolactate + phosphate. The polypeptide is Probable 2-phosphosulfolactate phosphatase (Symbiobacterium thermophilum (strain DSM 24528 / JCM 14929 / IAM 14863 / T)).